The primary structure comprises 161 residues: Eukaryotic translation initiation factor 5A-1 (161 aa).

Residues 1-12 (MSDEEHQFESKA) are compositionally biased toward basic and acidic residues. The disordered stretch occupies residues 1–21 (MSDEEHQFESKADAGASKTYP). Position 52 is a hypusine (lysine 52).

The protein belongs to the eIF-5A family. Lys-52 undergoes hypusination, a unique post-translational modification that consists in the addition of a butylamino group from spermidine to lysine side chain, leading to the formation of the unusual amino acid hypusine. eIF-5As are the only known proteins to undergo this modification, which is essential for their function.

In terms of biological role, translation factor that promotes translation elongation and termination, particularly upon ribosome stalling at specific amino acid sequence contexts. Binds between the exit (E) and peptidyl (P) site of the ribosome and promotes rescue of stalled ribosome: specifically required for efficient translation of polyproline-containing peptides as well as other motifs that stall the ribosome. Acts as a ribosome quality control (RQC) cofactor by joining the RQC complex to facilitate peptidyl transfer during CAT tailing step. This Medicago sativa (Alfalfa) protein is Eukaryotic translation initiation factor 5A-1.